Consider the following 391-residue polypeptide: 4-hydroxy-3-methylbut-2-en-1-yl diphosphate synthase (flavodoxin) (391 aa).

[4Fe-4S] cluster is bound by residues Cys-282, Cys-285, Cys-317, and Glu-324.

This sequence belongs to the IspG family. Requires [4Fe-4S] cluster as cofactor.

The enzyme catalyses (2E)-4-hydroxy-3-methylbut-2-enyl diphosphate + oxidized [flavodoxin] + H2O + 2 H(+) = 2-C-methyl-D-erythritol 2,4-cyclic diphosphate + reduced [flavodoxin]. It participates in isoprenoid biosynthesis; isopentenyl diphosphate biosynthesis via DXP pathway; isopentenyl diphosphate from 1-deoxy-D-xylulose 5-phosphate: step 5/6. Its function is as follows. Converts 2C-methyl-D-erythritol 2,4-cyclodiphosphate (ME-2,4cPP) into 1-hydroxy-2-methyl-2-(E)-butenyl 4-diphosphate. This Acidothermus cellulolyticus (strain ATCC 43068 / DSM 8971 / 11B) protein is 4-hydroxy-3-methylbut-2-en-1-yl diphosphate synthase (flavodoxin).